A 272-amino-acid polypeptide reads, in one-letter code: Hemin import ATP-binding protein HmuV (272 aa).

Residues 2–255 enclose the ABC transporter domain; that stretch reads LNADHLHVAR…EPIARCYGFR (254 aa). Residue 34 to 41 participates in ATP binding; the sequence is GRNGAGKS.

The protein belongs to the ABC transporter superfamily. Heme (hemin) importer (TC 3.A.1.14.5) family. In terms of assembly, the complex is composed of two ATP-binding proteins (HmuV), two transmembrane proteins (HmuU) and a solute-binding protein (HmuT).

The protein resides in the cell inner membrane. Its function is as follows. Part of the ABC transporter complex HmuTUV involved in hemin import. Responsible for energy coupling to the transport system. This is Hemin import ATP-binding protein HmuV from Burkholderia pseudomallei (strain 1710b).